The following is a 142-amino-acid chain: Putative pre-16S rRNA nuclease (142 aa).

Belongs to the YqgF nuclease family.

The protein localises to the cytoplasm. Its function is as follows. Could be a nuclease involved in processing of the 5'-end of pre-16S rRNA. In Staphylococcus aureus (strain bovine RF122 / ET3-1), this protein is Putative pre-16S rRNA nuclease.